Consider the following 457-residue polypeptide: tRNA modification GTPase MnmE (457 aa).

Residues Arg-25, Glu-87, and Arg-126 each contribute to the (6S)-5-formyl-5,6,7,8-tetrahydrofolate site. The region spanning 223 to 377 is the TrmE-type G domain; the sequence is GISTAIIGRP…IEERINNLFF (155 aa). Asn-233 contacts K(+). Residues 233–238, 252–258, and 277–280 contribute to the GTP site; these read NVGKSS, TDIAGTT, and DTAG. Ser-237 lines the Mg(2+) pocket. Thr-252, Ile-254, and Thr-257 together coordinate K(+). Thr-258 lines the Mg(2+) pocket. Lys-457 is a (6S)-5-formyl-5,6,7,8-tetrahydrofolate binding site.

The protein belongs to the TRAFAC class TrmE-Era-EngA-EngB-Septin-like GTPase superfamily. TrmE GTPase family. In terms of assembly, homodimer. Heterotetramer of two MnmE and two MnmG subunits. K(+) is required as a cofactor.

It localises to the cytoplasm. Functionally, exhibits a very high intrinsic GTPase hydrolysis rate. Involved in the addition of a carboxymethylaminomethyl (cmnm) group at the wobble position (U34) of certain tRNAs, forming tRNA-cmnm(5)s(2)U34. The chain is tRNA modification GTPase MnmE from Streptococcus pneumoniae serotype 2 (strain D39 / NCTC 7466).